The following is a 447-amino-acid chain: uncharacterized protein (447 aa).

Disordered regions lie at residues 1-80, 115-184, and 295-322; these read MTFE…EQSS, ATTQ…PNNP, and LQDN…SSGI. Positions 11 to 32 are enriched in basic and acidic residues; that stretch reads QRRDESAYRLGEEDGRQKGESS. Residues 42–51 show a composition bias toward polar residues; sequence KNPSNVSFWS. Residues 61 to 72 show a composition bias toward basic and acidic residues; it reads VKTDRPQFHRAD. Residues 115–158 show a composition bias toward polar residues; the sequence is ATTQSSPISTSFNPQLPSNSNTNRFDFGSESQLSSNYTNDTGLS. Residues 300–321 show a composition bias toward low complexity; that stretch reads SLTSQGSNLSSQNSGLSSSSSG. Helical transmembrane passes span 385-405 and 424-444; these read FMFL…ASFL and IINR…IGLG.

Its subcellular location is the membrane. This is an uncharacterized protein from Schizosaccharomyces pombe (strain 972 / ATCC 24843) (Fission yeast).